Reading from the N-terminus, the 114-residue chain is Somatostatin-1A (114 aa).

A signal peptide spans 1-24 (MLSTRIQCALALLSLALAVCSVSA). Residues 25–88 (APTDAKLRQL…KDEVRLELER (64 aa)) constitute a propeptide that is removed on maturation. The cysteines at positions 103 and 114 are disulfide-linked.

The protein belongs to the somatostatin family.

It is found in the secreted. Functionally, somatostatin inhibits the release of somatotropin. This Carassius auratus (Goldfish) protein is Somatostatin-1A (sst1a).